A 65-amino-acid chain; its full sequence is Antitoxin VapB32 (65 aa).

Residues 46-65 (ALGGTDPQATAAPRRRTSPR) are disordered.

Functionally, antitoxin component of a type II toxin-antitoxin (TA) system. In Mycobacterium tuberculosis (strain CDC 1551 / Oshkosh), this protein is Antitoxin VapB32 (vapB32).